Consider the following 104-residue polypeptide: V-type ATP synthase subunit F (104 aa).

It belongs to the V-ATPase F subunit family.

Produces ATP from ADP in the presence of a proton gradient across the membrane. This chain is V-type ATP synthase subunit F (atpF), found in Thermus thermophilus (strain ATCC 27634 / DSM 579 / HB8).